The following is a 624-amino-acid chain: tRNA uridine 5-carboxymethylaminomethyl modification enzyme MnmG (624 aa).

Residues 13–18 (GAGHAG), Val-125, and Ser-180 each bind FAD. Residue 272–286 (GPRYCPSIEDKVVKF) coordinates NAD(+). Gln-369 lines the FAD pocket.

It belongs to the MnmG family. As to quaternary structure, homodimer. Heterotetramer of two MnmE and two MnmG subunits. FAD serves as cofactor.

The protein resides in the cytoplasm. In terms of biological role, NAD-binding protein involved in the addition of a carboxymethylaminomethyl (cmnm) group at the wobble position (U34) of certain tRNAs, forming tRNA-cmnm(5)s(2)U34. This Thermodesulfovibrio yellowstonii (strain ATCC 51303 / DSM 11347 / YP87) protein is tRNA uridine 5-carboxymethylaminomethyl modification enzyme MnmG.